An 89-amino-acid chain; its full sequence is Small ribosomal subunit protein bS20 (89 aa).

Belongs to the bacterial ribosomal protein bS20 family.

Its function is as follows. Binds directly to 16S ribosomal RNA. In Helicobacter pylori (strain Shi470), this protein is Small ribosomal subunit protein bS20.